The chain runs to 551 residues: Ubiquitin domain-containing protein DSK2b (551 aa).

The 76-residue stretch at V18–S93 folds into the Ubiquitin-like domain. The disordered stretch occupies residues R88 to P127. STI1 domains follow at residues G143–M184 and N197–M236. Positions Q294–N319 are enriched in polar residues. The interval Q294–A336 is disordered. STI1 domains follow at residues S373–L410 and N414–M449. The segment at S455–G475 is disordered. Low complexity predominate over residues Q465–G475. One can recognise a UBA domain in the interval P504–S548.

As to quaternary structure, interacts with 'Lys-48'-linked polyubiquitin chains via its UBA domain. Interacts with RPN10 via its ubiquitin-like domain. Interacts with PEX2 and PEX12. In terms of tissue distribution, ubiquitous.

It localises to the nucleus. Its subcellular location is the cytoplasm. Functionally, binds and presumably selects ubiquitin-conjugates for destruction. Prefers multiubiquitin chains rather than single ubiquitins, with a binding affinity for 'Lys-48'-linked ubiquitin chains. Acts as a ubiquitin receptor that associates with the 26S proteasomal docking subunit RPN10 for the indirect recognition of ubiquitinated substrates of ubiquitin/26S proteasome-mediated proteolysis (UPP). The sequence is that of Ubiquitin domain-containing protein DSK2b (DSK2B) from Arabidopsis thaliana (Mouse-ear cress).